The following is a 215-amino-acid chain: Cytochrome b6 (215 aa).

A helical membrane pass occupies residues 32 to 52 (IFYCLGGITLTCFLVQVATGF). Position 35 (C35) interacts with heme c. Heme b contacts are provided by H86 and H100. 3 consecutive transmembrane segments (helical) span residues 90-110 (ASMMVLMMILHVFRVYLTGGF), 116-136 (LTWVTGVILAVLTASFGVTGY), and 186-206 (LHTFVLPLLTAVFMLMHFPMI). Heme b contacts are provided by H187 and H202.

The protein belongs to the cytochrome b family. PetB subfamily. In terms of assembly, the 4 large subunits of the cytochrome b6-f complex are cytochrome b6, subunit IV (17 kDa polypeptide, PetD), cytochrome f and the Rieske protein, while the 4 small subunits are PetG, PetL, PetM and PetN. The complex functions as a dimer. Requires heme b as cofactor. The cofactor is heme c.

It is found in the plastid. Its subcellular location is the chloroplast thylakoid membrane. Component of the cytochrome b6-f complex, which mediates electron transfer between photosystem II (PSII) and photosystem I (PSI), cyclic electron flow around PSI, and state transitions. The chain is Cytochrome b6 from Liriodendron tulipifera (Tuliptree).